Here is a 1452-residue protein sequence, read N- to C-terminus: Arf-GAP with Rho-GAP domain, ANK repeat and PH domain-containing protein 1 (1452 aa).

One can recognise an SAM domain in the interval 6–70 (DAALSVAEWL…LAGLHRAHAP (65 aa)). The segment at 81 to 90 (PVPMKRHIFR) is required for interaction with SH3KBP1. Disordered regions lie at residues 87–258 (HIFR…LPSR) and 271–304 (EGEE…LNPP). Composition is skewed to pro residues over residues 92-104 (PPVP…PPPT), 154-167 (SVPP…PPYP), and 205-225 (PLQP…PPRL). Composition is skewed to acidic residues over residues 228 to 239 (EFDDSDYDDVPE) and 271 to 286 (EGEE…DDDH). A Phosphoserine modification is found at serine 232. Tyrosine 234 carries the phosphotyrosine; by PTK6 modification. In terms of domain architecture, PH 1 spans 329-421 (PVIKAGWLDK…WMQALQQAVV (93 aa)). Serine 430 is subject to Phosphoserine. The PH 2 domain maps to 442–531 (QPDRAGSLEL…WLEAMQGAIA (90 aa)). Tyrosine 506 carries the post-translational modification Phosphotyrosine. An Arf-GAP domain is found at 537-662 (SEVAERIWAA…RYHPLFGNQE (126 aa)). The C4-type zinc finger occupies 552-575 (CADCGAAQPDWASINLCVVICKRC). Serine 740 bears the Phosphoserine mark. The PH 3 domain occupies 745–852 (TVSHSGFLYK…WVKCIAKAFV (108 aa)). Positions 956–1141 (ASLGDTLSEQ…DLINHYVVVF (186 aa)) constitute a Rho-GAP domain. Positions 1174–1263 (GDFICTVYLE…SHLVVKKYQS (90 aa)) constitute a Ras-associating domain. Residues 1276 to 1398 (GDTKHGMMKF…WFATFLSVQH (123 aa)) form the PH 4 domain. Phosphoserine occurs at positions 1430 and 1437.

In terms of assembly, interacts with SH3KBP1/CIN85 (via SH3 domains). The interaction is independent of EGF and does not affect ARAP1 GTPase-activating activity but is involved in regulating ubiquitination and endocytic trafficking of EGFR. ARAP1 competes with E3 ubiquitin-protein ligase CBL for binding to SH3KBP1, preventing interaction of CBL with SH3KBP1; this is likely to regulate SH3KBP1-mediated internalization of EGFR. Interacts with TNFRSF10A. In terms of processing, phosphorylated by PTK6 following EGF stimulation which enhances EGFR signaling by delaying EGFR down-regulation; the interaction is mediated by the SH2 domain of PTK6. Phosphorylation promotes association with the Golgi apparatus and endosomes. As to expression, expressed in the retina where it is detected in Mueller glia (at protein level). Also detected in the retinal pigment epithelium (at protein level). Expressed in osteoclasts (at protein level).

The protein localises to the cytoplasm. Its subcellular location is the golgi apparatus. It is found in the trans-Golgi network. The protein resides in the golgi stack membrane. It localises to the cell membrane. The protein localises to the endosome. Its subcellular location is the multivesicular body. It is found in the cell projection. The protein resides in the ruffle. It localises to the podosome. The protein localises to the early endosome. Its function is as follows. Phosphatidylinositol 3,4,5-trisphosphate-dependent GTPase-activating protein that modulates actin cytoskeleton remodeling by regulating ARF and RHO family members. Activated by phosphatidylinositol 3,4,5-trisphosphate (PtdIns(3,4,5)P3) binding and, to a lesser extent, by phosphatidylinositol 3,4-bisphosphate (PtdIns(3,4)P2) binding. Has a preference for ARF1 and ARF5. Positively regulates the ring size of circular dorsal ruffles and promotes macropinocytosis. Acts as a bridging factor in osteoclasts to control actin and membrane dynamics. Regulates the condensing of osteoclast podosomes into sealing zones which segregate the bone-facing membrane from other membrane domains and are required for osteoclast resorption activity. Also regulates recruitment of the AP-3 complex to endosomal membranes and trafficking of lysosomal membrane proteins to the ruffled membrane border of osteoclasts to modulate bone resorption. Regulates the endocytic trafficking of EGFR. Regulates the incorporation of CD63 and CD9 into multivesicular bodies. Required in the retinal pigment epithelium (RPE) for photoreceptor survival due to its role in promoting RPE phagocytosis. This Mus musculus (Mouse) protein is Arf-GAP with Rho-GAP domain, ANK repeat and PH domain-containing protein 1.